We begin with the raw amino-acid sequence, 368 residues long: Ceramide synthase hyl-1 (368 aa).

A run of 7 helical transmembrane segments spans residues Phe-27–Trp-47, Ile-92–Val-112, Ile-138–Phe-158, Phe-165–Ile-185, Gly-191–Val-211, Phe-225–Ile-245, and Leu-275–Leu-295. Positions Lys-90–Thr-303 constitute a TLC domain. The interval Gln-306–Glu-368 is disordered. Residues Thr-343–Glu-353 show a composition bias toward acidic residues. Residues Arg-357–Glu-368 show a composition bias toward basic residues.

This sequence belongs to the sphingosine N-acyltransferase family.

Its subcellular location is the membrane. It carries out the reaction a very long-chain fatty acyl-CoA + a sphingoid base = an N-(very-long-chain fatty acyl)-sphingoid base + CoA + H(+). It catalyses the reaction 15-methylhexadecasphinganine + a fatty acyl-CoA = an N-acyl-15-methylhexadecasphinganine + CoA + H(+). The enzyme catalyses a fatty acyl-CoA + sphinganine = an N-acylsphinganine + CoA + H(+). The catalysed reaction is sphinganine + tetradecanoyl-CoA = N-(tetradecanoyl)-sphinganine + CoA + H(+). It carries out the reaction hexacosanoyl-CoA + sphinganine = N-hexacosanoylsphinganine + CoA + H(+). It functions in the pathway lipid metabolism; sphingolipid metabolism. In terms of biological role, catalyzes the acylation of sphingoid bases to form ceramides, which are key players in cell signaling events such as extending lifespan and enhancing stress resistance. C.elegans contain specific sphingoid bases, which are unique or different in structure compared to the sphingoid bases found in other animals. Two examples of these distinctive compounds are: 15-methylhexadecasphinganine and 15-methylhexadecasphing-4-enine. Exhibits substrate preference for fatty acyl-coA chains containing carbon chain length (C16-C18) and very long chains (24 carbons and more). The sequence is that of Ceramide synthase hyl-1 (hyl-1) from Caenorhabditis elegans.